The sequence spans 880 residues: Alanine--tRNA ligase (880 aa).

His569, His573, Cys671, and His675 together coordinate Zn(2+).

This sequence belongs to the class-II aminoacyl-tRNA synthetase family. In terms of assembly, homotetramer. It depends on Zn(2+) as a cofactor.

The protein resides in the cytoplasm. It catalyses the reaction tRNA(Ala) + L-alanine + ATP = L-alanyl-tRNA(Ala) + AMP + diphosphate. Its function is as follows. Catalyzes the attachment of alanine to tRNA(Ala) in a two-step reaction: alanine is first activated by ATP to form Ala-AMP and then transferred to the acceptor end of tRNA(Ala). Also edits incorrectly charged Ser-tRNA(Ala) and Gly-tRNA(Ala) via its editing domain. The polypeptide is Alanine--tRNA ligase (Buchnera aphidicola subsp. Baizongia pistaciae (strain Bp)).